Reading from the N-terminus, the 253-residue chain is Small ribosomal subunit protein uS2 (253 aa).

The protein belongs to the universal ribosomal protein uS2 family.

The chain is Small ribosomal subunit protein uS2 from Chlorobium luteolum (strain DSM 273 / BCRC 81028 / 2530) (Pelodictyon luteolum).